We begin with the raw amino-acid sequence, 131 residues long: Peptide methionine sulfoxide reductase MsrB (131 aa).

The 123-residue stretch at 8 to 130 (LDTWREELTD…NSLSLKLVPR (123 aa)) folds into the MsrB domain. C47, C50, C96, and C99 together coordinate Zn(2+). The active-site Nucleophile is C119.

It belongs to the MsrB Met sulfoxide reductase family. Requires Zn(2+) as cofactor.

The catalysed reaction is L-methionyl-[protein] + [thioredoxin]-disulfide + H2O = L-methionyl-(R)-S-oxide-[protein] + [thioredoxin]-dithiol. The sequence is that of Peptide methionine sulfoxide reductase MsrB from Ectopseudomonas mendocina (strain ymp) (Pseudomonas mendocina).